A 604-amino-acid chain; its full sequence is MSRSAAASGGPRRPDQHLSPAPCGASGPPETFRTESDGAGTMNKLRQSLRRRKPAYVPEASRPHQWQADEDAVRKGTCSFPVRYLGHVEVEESRGMHVCEDAVKKLKAMGRKSVKSVLWVSADGLRVVDDKTKDLLVDQTIEKVSFCAPDRNLDKAFSYICRDGTTRRWICHCFLALKDSGERLSHAVGCAFAACLERKQRREKECGVTAAFDASRTSFAREGSFRLSGGGRPAEREAGDKKKAEAAAAPAVAPGPAQPGHVSPTPATTSPGEKGEAGTPVAAGTTAAAIPRRHAPLEQLVRQGSFRGFPALSQKNSPFKRQLSLRLNELPSTLQRRTDFQVKGTVPEMEPPGTGDSDGINALCTQISSSFASAGAPASGPPPATTGTSAWGEPSVPAAAAFQPGHKRTPSEAERWLEEVSQVAKAQQQQQQQQQQQQQQQATSVPPMPTMAPTLQPFSAPVGPFDTAAAQVAVFLPPTHMQPPFVPAYPGLGYPPMPRVPVVGITPSQMVANAFCSAAQLQPQPATLLGKAGAFPPPAAPSAPGGQARPRPNGAPWPPEPAPAPAPELDPFEAQWAALEGKPAVEKPSNPFSGDLQKTFEIEL.

Disordered stretches follow at residues methionine 1–alanine 68, glycine 223–alanine 283, alanine 372–proline 457, and lysine 531–leucine 604. Residues arginine 74 to phenylalanine 225 form the PID domain. Phosphoserine occurs at positions 224 and 228. Positions proline 233–glutamate 245 are enriched in basic and acidic residues. Residues alanine 246 to glycine 260 are compositionally biased toward low complexity. Residue serine 263 is modified to Phosphoserine. Threonine 279 bears the Phosphothreonine mark. The segment covering threonine 409–glutamate 418 has biased composition (basic and acidic residues). Phosphoserine is present on serine 411. Low complexity-rich tracts occupy residues glutamine 427–glutamine 441 and serine 542–proline 552. Positions asparagine 553–glutamate 568 are enriched in pro residues.

In terms of assembly, interacts (via PTB domain) with MAP3K7IP2 (via C-terminal). Interacts (via C-terminal) with TRAF6 (via TRAF domains). Associates with EPS15 and NOTCH1. As to expression, preferentially expressed in the nervous system. In the developing neocortex, expressed in postmitotic neurons in the cortical plate but not in progenitors within the ventricular zone.

The protein resides in the cytoplasm. Plays a role in the process of neurogenesis. Required throughout embryonic neurogenesis to maintain neural progenitor cells, also called radial glial cells (RGCs), by allowing their daughter cells to choose progenitor over neuronal cell fate. Not required for the proliferation of neural progenitor cells before the onset of embryonic neurogenesis. Also required postnatally in the subventricular zone (SVZ) neurogenesis by regulating SVZ neuroblasts survival and ependymal wall integrity. Negative regulator of NF-kappa-B signaling pathway. The inhibition of NF-kappa-B activation is mediated at least in part, by preventing MAP3K7IP2 to interact with polyubiquitin chains of TRAF6 and RIPK1 and by stimulating the 'Lys-48'-linked polyubiquitination and degradation of TRAF6 in cortical neurons. This chain is Numb-like protein (Numbl), found in Mus musculus (Mouse).